A 1508-amino-acid polypeptide reads, in one-letter code: ABC-type transporter oblD (1508 aa).

2 disordered regions span residues 1-35 (MSLGPGGFEATPNSVMPSDASLHNQSHHTDSLTNN) and 54-82 (KYTQNSVYSTTSQNPFAAEPGSKLDPNGG). A compositionally biased stretch (polar residues) spans 11–24 (TPNSVMPSDASLHN). N-linked (GlcNAc...) asparagine glycans are attached at residues asparagine 24 and asparagine 35. Positions 55-68 (YTQNSVYSTTSQNP) are enriched in polar residues. N-linked (GlcNAc...) asparagine glycans are attached at residues asparagine 83, asparagine 231, and asparagine 314. An ABC transporter 1 domain is found at 136–390 (LEAVGLVRKL…FLNMGFVCPD (255 aa)). 5 consecutive transmembrane segments (helical) span residues 501-521 (ITISSAMGNAIIALIISSMFF), 536-556 (LLFFAIVINAFSSGLEMLTLY), 610-630 (GNFFFFVFTSFVLTLTMSMFF), 643-663 (ALPFAAILITGLTMYTGFTIP), and 752-772 (GIIFAFMVILCAIYLVASDFI). Residues 828–1070 (FQWKDICYDI…ILIDYFTRNG (243 aa)) form the ABC transporter 2 domain. 864–871 (GVSGAGKT) is a binding site for ATP. The next 4 helical transmembrane spans lie at 1172–1192 (YIYSKAFLCVSTSLYVGFSLY), 1206–1226 (FAIFTLFFLFGQFIQQIMPHF), 1296–1316 (LFVWVFLMFASTFAHFMIAAL), and 1322–1342 (AGNMGNLLFTLCVIFCGILTT). N-linked (GlcNAc...) asparagine glycosylation is present at asparagine 1390. A helical membrane pass occupies residues 1443–1463 (FGLMWVFVVFNAFAACGLYYW).

This sequence belongs to the ABC transporter superfamily. ABCG family. PDR (TC 3.A.1.205) subfamily.

It is found in the cell membrane. ABC-type transporter; part of the gene cluster that mediates the biosynthesis of the sesterterpenes ophiobolins, fungal phytotoxins with potential anti-cancer activities. Acts as a specific transporter involved in ophiobolins secretion. The protein is ABC-type transporter oblD of Cochliobolus heterostrophus (strain C5 / ATCC 48332 / race O) (Southern corn leaf blight fungus).